The primary structure comprises 487 residues: Protein nucleotidyltransferase YdiU (487 aa).

8 residues coordinate ATP: G85, G87, R88, K108, D120, G121, R171, and R178. The Proton acceptor role is filled by D247. Residues N248 and D257 each contribute to the Mg(2+) site. An ATP-binding site is contributed by D257.

The protein belongs to the SELO family. Mg(2+) is required as a cofactor. Requires Mn(2+) as cofactor.

It carries out the reaction L-seryl-[protein] + ATP = 3-O-(5'-adenylyl)-L-seryl-[protein] + diphosphate. It catalyses the reaction L-threonyl-[protein] + ATP = 3-O-(5'-adenylyl)-L-threonyl-[protein] + diphosphate. The enzyme catalyses L-tyrosyl-[protein] + ATP = O-(5'-adenylyl)-L-tyrosyl-[protein] + diphosphate. The catalysed reaction is L-histidyl-[protein] + UTP = N(tele)-(5'-uridylyl)-L-histidyl-[protein] + diphosphate. It carries out the reaction L-seryl-[protein] + UTP = O-(5'-uridylyl)-L-seryl-[protein] + diphosphate. It catalyses the reaction L-tyrosyl-[protein] + UTP = O-(5'-uridylyl)-L-tyrosyl-[protein] + diphosphate. Functionally, nucleotidyltransferase involved in the post-translational modification of proteins. It can catalyze the addition of adenosine monophosphate (AMP) or uridine monophosphate (UMP) to a protein, resulting in modifications known as AMPylation and UMPylation. The sequence is that of Protein nucleotidyltransferase YdiU from Agrobacterium fabrum (strain C58 / ATCC 33970) (Agrobacterium tumefaciens (strain C58)).